The primary structure comprises 711 residues: Polyribonucleotide nucleotidyltransferase (711 aa).

2 residues coordinate Mg(2+): aspartate 486 and aspartate 492. The KH domain maps to 553–612 (PRIHTIKINPDKIKDVIGKGGSVIRALTEETGTTIEIEDDGTVKIAATDGEKAKNAIRRI). One can recognise an S1 motif domain in the interval 622–690 (GRVYNGKVTR…RQGRIRLSIK (69 aa)). Residues 689 to 711 (IKEATEQSQPAAAPEAPAAEQGE) form a disordered region. Over residues 694 to 711 (EQSQPAAAPEAPAAEQGE) the composition is skewed to low complexity.

Belongs to the polyribonucleotide nucleotidyltransferase family. As to quaternary structure, component of the RNA degradosome, which is a multiprotein complex involved in RNA processing and mRNA degradation. The cofactor is Mg(2+).

The protein resides in the cytoplasm. It carries out the reaction RNA(n+1) + phosphate = RNA(n) + a ribonucleoside 5'-diphosphate. Its function is as follows. Involved in mRNA degradation. Catalyzes the phosphorolysis of single-stranded polyribonucleotides processively in the 3'- to 5'-direction. The protein is Polyribonucleotide nucleotidyltransferase of Escherichia fergusonii (strain ATCC 35469 / DSM 13698 / CCUG 18766 / IAM 14443 / JCM 21226 / LMG 7866 / NBRC 102419 / NCTC 12128 / CDC 0568-73).